A 612-amino-acid polypeptide reads, in one-letter code: Large ribosomal subunit assembly factor BipA (612 aa).

A tr-type G domain is found at 5–200 (NDLRNIAIIA…TIIKHVPAPV (196 aa)). Residues 17-22 (DHGKTT) and 130-133 (NKID) each bind GTP.

This sequence belongs to the TRAFAC class translation factor GTPase superfamily. Classic translation factor GTPase family. BipA subfamily. As to quaternary structure, monomer.

Its subcellular location is the cytoplasm. The catalysed reaction is GTP + H2O = GDP + phosphate + H(+). Functionally, a 50S ribosomal subunit assembly protein with GTPase activity, required for 50S subunit assembly at low temperatures, may also play a role in translation. Binds GTP and analogs. Binds the 70S ribosome between the 30S and 50S subunits, in a similar position as ribosome-bound EF-G; it contacts a number of ribosomal proteins, both rRNAs and the A-site tRNA. The sequence is that of Large ribosomal subunit assembly factor BipA from Bacillus subtilis (strain 168).